Consider the following 35-residue polypeptide: Mu-theraphotoxin-Pn3b (35 aa).

Intrachain disulfides connect Cys2–Cys16, Cys9–Cys21, and Cys15–Cys28.

The protein belongs to the neurotoxin 10 (Hwtx-1) family. 28 (Jztx-11) subfamily. As to expression, expressed by the venom gland.

It localises to the secreted. Gating-modifier toxin that targets voltage-gated sodium channels with a preferential activity on Nav1.7/SCN9A. On Nav1.7/SCN9A, the toxin acts by shifting the voltage-dependence of activation to more depolarized potentials, whereas it does not cause significant effect on the voltage-dependence of activation on other sodium channels. Minor effects are observed on the voltage-dependence of steady-state fast inactivation for all sodium channels tested (Nav1.1/SCN1A-Nav1.8/SCN10A). By testing the toxin on channel chimera, it has been shown to interact with the S3-S4 linkers in DII and DIV domains of Nav1.7/SCN9A. In vivo, the toxin dose-dependently reduces OD1-induced spontaneous pain behaviors. The sequence is that of Mu-theraphotoxin-Pn3b from Pamphobeteus nigricolor (Giant blue bloom tarantula).